A 350-amino-acid chain; its full sequence is Sterol-4-alpha-carboxylate 3-dehydrogenase ERG26, decarboxylating (350 aa).

NADP(+) contacts are provided by residues 12–18 (GGSGFLG), 63–64 (DL), and 85–87 (SAS). Positions 125 and 152 each coordinate substrate. NADP(+)-binding positions include Y152, K156, and 179–182 (PAGI). K156 functions as the Proton donor in the catalytic mechanism.

The protein belongs to the 3-beta-HSD family. Heterotetramer of ERG25, ERG26, ERG27 and ERG28. ERG28 acts as a scaffold to tether ERG27 and other 4,4-demethylation-related enzymes, forming a demethylation enzyme complex, in the endoplasmic reticulum.

It localises to the endoplasmic reticulum membrane. It catalyses the reaction 4beta-methylzymosterol-4alpha-carboxylate + NADP(+) = 3-dehydro-4-methylzymosterol + CO2 + NADPH. It functions in the pathway steroid biosynthesis; zymosterol biosynthesis; zymosterol from lanosterol: step 4/6. Its function is as follows. Sterol-4-alpha-carboxylate 3-dehydrogenase; part of the third module of ergosterol biosynthesis pathway that includes the late steps of the pathway. ERG26 is a catalytic component of the C-4 demethylation complex that catalyzes the oxidative decarboxylation that results in a reduction of the 3-beta-hydroxy group at the C-3 carbon to an oxo group. The third module or late pathway involves the ergosterol synthesis itself through consecutive reactions that mainly occur in the endoplasmic reticulum (ER) membrane. Firstly, the squalene synthase ERG9 catalyzes the condensation of 2 farnesyl pyrophosphate moieties to form squalene, which is the precursor of all steroids. Squalene synthase is crucial for balancing the incorporation of farnesyl diphosphate (FPP) into sterol and nonsterol isoprene synthesis. Secondly, the squalene epoxidase ERG1 catalyzes the stereospecific oxidation of squalene to (S)-2,3-epoxysqualene, which is considered to be a rate-limiting enzyme in steroid biosynthesis. Then, the lanosterol synthase ERG7 catalyzes the cyclization of (S)-2,3 oxidosqualene to lanosterol, a reaction that forms the sterol core. In the next steps, lanosterol is transformed to zymosterol through a complex process involving various demethylation, reduction and desaturation reactions. The lanosterol 14-alpha-demethylase ERG11 (also known as CYP51) catalyzes C14-demethylation of lanosterol to produce 4,4'-dimethyl cholesta-8,14,24-triene-3-beta-ol, which is critical for ergosterol biosynthesis. The C-14 reductase ERG24 reduces the C14=C15 double bond of 4,4-dimethyl-cholesta-8,14,24-trienol to produce 4,4-dimethyl-cholesta-8,24-dienol. 4,4-dimethyl-cholesta-8,24-dienol is substrate of the C-4 demethylation complex ERG25-ERG26-ERG27 in which ERG25 catalyzes the three-step monooxygenation required for the demethylation of 4,4-dimethyl and 4alpha-methylsterols, ERG26 catalyzes the oxidative decarboxylation that results in a reduction of the 3-beta-hydroxy group at the C-3 carbon to an oxo group, and ERG27 is responsible for the reduction of the keto group on the C-3. ERG28 has a role as a scaffold to help anchor ERG25, ERG26 and ERG27 to the endoplasmic reticulum and ERG29 regulates the activity of the iron-containing C4-methylsterol oxidase ERG25. Then, the sterol 24-C-methyltransferase ERG6 catalyzes the methyl transfer from S-adenosyl-methionine to the C-24 of zymosterol to form fecosterol. The C-8 sterol isomerase ERG2 catalyzes the reaction which results in unsaturation at C-7 in the B ring of sterols and thus converts fecosterol to episterol. The sterol-C5-desaturase ERG3 then catalyzes the introduction of a C-5 double bond in the B ring to produce 5-dehydroepisterol. The C-22 sterol desaturase ERG5 further converts 5-dehydroepisterol into ergosta-5,7,22,24(28)-tetraen-3beta-ol by forming the C-22(23) double bond in the sterol side chain. Finally, ergosta-5,7,22,24(28)-tetraen-3beta-ol is substrate of the C-24(28) sterol reductase ERG4 to produce ergosterol. This Candida albicans (strain SC5314 / ATCC MYA-2876) (Yeast) protein is Sterol-4-alpha-carboxylate 3-dehydrogenase ERG26, decarboxylating.